The sequence spans 104 residues: Iron-sulfur cluster assembly protein CyaY (104 aa).

Belongs to the frataxin family.

Functionally, involved in iron-sulfur (Fe-S) cluster assembly. May act as a regulator of Fe-S biogenesis. This Vibrio parahaemolyticus serotype O3:K6 (strain RIMD 2210633) protein is Iron-sulfur cluster assembly protein CyaY.